A 427-amino-acid chain; its full sequence is Adenylosuccinate synthetase (427 aa).

GTP-binding positions include 12-18 (GDEGKGK) and 40-42 (GHT). Catalysis depends on Asp-13, which acts as the Proton acceptor. Mg(2+)-binding residues include Asp-13 and Gly-40. IMP-binding positions include 13 to 16 (DEGK), 38 to 41 (NAGH), Thr-128, Arg-142, Gln-223, Thr-238, and Arg-302. Catalysis depends on His-41, which acts as the Proton donor. 298–304 (VTTGRAR) contributes to the substrate binding site. Residues Arg-304, 330–332 (KLD), and 412–414 (GVG) each bind GTP.

The protein belongs to the adenylosuccinate synthetase family. In terms of assembly, homodimer. Mg(2+) is required as a cofactor.

Its subcellular location is the cytoplasm. The catalysed reaction is IMP + L-aspartate + GTP = N(6)-(1,2-dicarboxyethyl)-AMP + GDP + phosphate + 2 H(+). The protein operates within purine metabolism; AMP biosynthesis via de novo pathway; AMP from IMP: step 1/2. Its function is as follows. Plays an important role in the de novo pathway of purine nucleotide biosynthesis. Catalyzes the first committed step in the biosynthesis of AMP from IMP. The polypeptide is Adenylosuccinate synthetase (Parafrankia sp. (strain EAN1pec)).